The sequence spans 344 residues: Uroporphyrinogen decarboxylase (344 aa).

Residues Arg-24–Arg-28, Phe-43, Asp-74, Tyr-149, Ser-204, and His-319 contribute to the substrate site.

It belongs to the uroporphyrinogen decarboxylase family. Homodimer.

It is found in the cytoplasm. It catalyses the reaction uroporphyrinogen III + 4 H(+) = coproporphyrinogen III + 4 CO2. It functions in the pathway porphyrin-containing compound metabolism; protoporphyrin-IX biosynthesis; coproporphyrinogen-III from 5-aminolevulinate: step 4/4. Functionally, catalyzes the decarboxylation of four acetate groups of uroporphyrinogen-III to yield coproporphyrinogen-III. This chain is Uroporphyrinogen decarboxylase, found in Agrobacterium fabrum (strain C58 / ATCC 33970) (Agrobacterium tumefaciens (strain C58)).